We begin with the raw amino-acid sequence, 414 residues long: Histidine--tRNA ligase (414 aa).

Belongs to the class-II aminoacyl-tRNA synthetase family. Homodimer.

Its subcellular location is the cytoplasm. The catalysed reaction is tRNA(His) + L-histidine + ATP = L-histidyl-tRNA(His) + AMP + diphosphate + H(+). This is Histidine--tRNA ligase from Anaeromyxobacter dehalogenans (strain 2CP-1 / ATCC BAA-258).